The chain runs to 314 residues: Ribose-phosphate pyrophosphokinase (314 aa).

Residues 37-39 (DGE) and 96-97 (RQ) each bind ATP. Mg(2+) contacts are provided by H131 and D170. The active site involves K194. D-ribose 5-phosphate contacts are provided by residues R196, D220, and 224-228 (DTGGT).

Belongs to the ribose-phosphate pyrophosphokinase family. Class I subfamily. Homohexamer. It depends on Mg(2+) as a cofactor.

The protein localises to the cytoplasm. The enzyme catalyses D-ribose 5-phosphate + ATP = 5-phospho-alpha-D-ribose 1-diphosphate + AMP + H(+). The protein operates within metabolic intermediate biosynthesis; 5-phospho-alpha-D-ribose 1-diphosphate biosynthesis; 5-phospho-alpha-D-ribose 1-diphosphate from D-ribose 5-phosphate (route I): step 1/1. Involved in the biosynthesis of the central metabolite phospho-alpha-D-ribosyl-1-pyrophosphate (PRPP) via the transfer of pyrophosphoryl group from ATP to 1-hydroxyl of ribose-5-phosphate (Rib-5-P). The polypeptide is Ribose-phosphate pyrophosphokinase (Vibrio vulnificus (strain CMCP6)).